The following is a 144-amino-acid chain: 3-dehydroquinate dehydratase (144 aa).

Tyrosine 22 acts as the Proton acceptor in catalysis. Substrate contacts are provided by asparagine 73, histidine 79, and aspartate 86. Histidine 99 acts as the Proton donor in catalysis. Substrate is bound by residues 100 to 101 and arginine 110; that span reads IS.

Belongs to the type-II 3-dehydroquinase family. In terms of assembly, homododecamer.

The enzyme catalyses 3-dehydroquinate = 3-dehydroshikimate + H2O. It participates in metabolic intermediate biosynthesis; chorismate biosynthesis; chorismate from D-erythrose 4-phosphate and phosphoenolpyruvate: step 3/7. Catalyzes a trans-dehydration via an enolate intermediate. This is 3-dehydroquinate dehydratase from Clostridium acetobutylicum (strain ATCC 824 / DSM 792 / JCM 1419 / IAM 19013 / LMG 5710 / NBRC 13948 / NRRL B-527 / VKM B-1787 / 2291 / W).